The following is a 187-amino-acid chain: MYSTTVLATGTKDTSLVNRIFGLDMQLVVDVAIMGLAIFVLFLILSYLLFNPARELLQKRQDRIKEEMDSSAKDKKEATQLKTNYEAKIKEASKEVDEILSEGRKKALKRENDIVDEAKVEASRIVDRANKEIELNKSKMKDEVKQEMIAVASVMAGKIIAGNIDETKQKQLIDEALNEMGDETWQN.

Residues 31 to 51 (VAIMGLAIFVLFLILSYLLFN) form a helical membrane-spanning segment.

This sequence belongs to the ATPase B chain family. In terms of assembly, F-type ATPases have 2 components, F(1) - the catalytic core - and F(0) - the membrane proton channel. F(1) has five subunits: alpha(3), beta(3), gamma(1), delta(1), epsilon(1). F(0) has three main subunits: a(1), b(2) and c(10-14). The alpha and beta chains form an alternating ring which encloses part of the gamma chain. F(1) is attached to F(0) by a central stalk formed by the gamma and epsilon chains, while a peripheral stalk is formed by the delta and b chains.

It is found in the cell membrane. Functionally, f(1)F(0) ATP synthase produces ATP from ADP in the presence of a proton or sodium gradient. F-type ATPases consist of two structural domains, F(1) containing the extramembraneous catalytic core and F(0) containing the membrane proton channel, linked together by a central stalk and a peripheral stalk. During catalysis, ATP synthesis in the catalytic domain of F(1) is coupled via a rotary mechanism of the central stalk subunits to proton translocation. Its function is as follows. Component of the F(0) channel, it forms part of the peripheral stalk, linking F(1) to F(0). This is ATP synthase subunit b from Lachnoclostridium phytofermentans (strain ATCC 700394 / DSM 18823 / ISDg) (Clostridium phytofermentans).